The primary structure comprises 646 residues: Nitrous-oxide reductase (646 aa).

The disordered stretch occupies residues 1–21; the sequence is MMSKHPHSPSTPQDETPSVPG. The tat-type signal signal peptide spans 1–52; that stretch reads MMSKHPHSPSTPQDETPSVPGRRRFMNSAALAGLATVVACTDKGAPAGSAAA. Residues His140, His141, and His189 each contribute to the Cu cation site. Ca(2+)-binding residues include Tyr272, Glu275, Met283, Asp289, and Asn342. The Cu cation site is built by His344, His400, and His452. 2 residues coordinate Ca(2+): Lys473 and Glu488. Cu cation-binding residues include His513, His592, Cys627, His629, Cys631, His635, and Met638. The segment at 551 to 646 is COX2-like; sequence KKVTVRLTSQ…EMRSRMIVEA (96 aa).

The protein belongs to the NosZ family. It in the C-terminal section; belongs to the cytochrome c oxidase subunit 2 family. In terms of assembly, homodimer. The cofactor is Ca(2+). Cu cation serves as cofactor. Post-translationally, predicted to be exported by the Tat system. The position of the signal peptide cleavage has not been experimentally proven.

The protein localises to the periplasm. The catalysed reaction is N2 + 2 Fe(III)-[cytochrome c] + H2O = nitrous oxide + 2 Fe(II)-[cytochrome c] + 2 H(+). Its pathway is nitrogen metabolism; nitrate reduction (denitrification); dinitrogen from nitrate: step 4/4. Its function is as follows. Nitrous-oxide reductase is part of a bacterial respiratory system which is activated under anaerobic conditions in the presence of nitrate or nitrous oxide. The protein is Nitrous-oxide reductase (nosZ) of Ralstonia nicotianae (strain ATCC BAA-1114 / GMI1000) (Ralstonia solanacearum).